The sequence spans 434 residues: Nuclear receptor subfamily 1 group I member 2 (434 aa).

A DNA-binding region (nuclear receptor) is located at residues 38-107; sequence PQICRVCGDK…RLRKCLESGM (70 aa). 2 NR C4-type zinc fingers span residues 41–61 and 77–102; these read CRVC…CEGC and CPFR…LRKC. Positions 66–92 match the Bipartite nuclear localization signal motif; that stretch reads RRAMKRNARLRCPFRKGACEITRKTRR. The tract at residues 108–145 is hinge; that stretch reads KKEMIMSDAAVEERRALIKRKKRERIGTQPPGVQGLTE. The NR LBD domain maps to 146–433; the sequence is EQRMMIRELM…LMQELFGITG (288 aa). Residues S247, 285-288, and H407 contribute to the hyperforin site; that span reads QLRF.

This sequence belongs to the nuclear hormone receptor family. NR1 subfamily. Heterodimer with RXRA. Interacts with NCOA1. Interacts (via domain NR LBD) with CRY1 and CRY2 in a ligand-dependent manner.

Its subcellular location is the nucleus. Functionally, nuclear receptor that binds and is activated by a variety of endogenous and xenobiotic compounds. Transcription factor that activates the transcription of multiple genes involved in the metabolism and secretion of potentially harmful xenobiotics, endogenous compounds and drugs. Response to specific ligands is species-specific, due to differences in the ligand-binding domain. Activated by naturally occurring steroids, such as pregnenolone and progesterone. Binds to a response element in the promoters of the CYP3A4 and ABCB1/MDR1 genes. The polypeptide is Nuclear receptor subfamily 1 group I member 2 (NR1I2) (Macaca mulatta (Rhesus macaque)).